Consider the following 201-residue polypeptide: Small ribosomal subunit protein uS4c (201 aa).

An S4 RNA-binding domain is found at 91–151 (MRLDNIIFQL…TKNPEELRTI (61 aa)).

Belongs to the universal ribosomal protein uS4 family. Part of the 30S ribosomal subunit. Contacts protein S5. The interaction surface between S4 and S5 is involved in control of translational fidelity.

It is found in the plastid. Its subcellular location is the chloroplast. In terms of biological role, one of the primary rRNA binding proteins, it binds directly to 16S rRNA where it nucleates assembly of the body of the 30S subunit. Its function is as follows. With S5 and S12 plays an important role in translational accuracy. This is Small ribosomal subunit protein uS4c (rps4) from Welwitschia mirabilis (Tree tumbo).